The primary structure comprises 106 residues: Large ribosomal subunit protein bL21 (106 aa).

Belongs to the bacterial ribosomal protein bL21 family. In terms of assembly, part of the 50S ribosomal subunit. Contacts protein L20.

Its function is as follows. This protein binds to 23S rRNA in the presence of protein L20. The sequence is that of Large ribosomal subunit protein bL21 from Syntrophobacter fumaroxidans (strain DSM 10017 / MPOB).